Reading from the N-terminus, the 111-residue chain is Latartoxin-2b (111 aa).

The first 19 residues, 1-19, serve as a signal peptide directing secretion; it reads MKVLVIIALCFFILQTALS. Residues 20-43 constitute a propeptide, removed in mature form; sequence EDKYESFESYVEDLKSGNMKGEAR. A Processing quadruplet motif motif is present at residues 40–43; the sequence is GEAR. 5 cysteine pairs are disulfide-bonded: C45-C62, C52-C73, C61-C87, C75-C85, and C78-C99. V110 is subject to Valine amide.

It belongs to the neurotoxin 19 (CSTX) family. 11 (latartoxin) subfamily. Post-translationally, contains 5 disulfide bonds. In terms of processing, cleavage of the propeptide depends on the processing quadruplet motif (XXXR, with at least one of X being E). As to expression, expressed by the venom gland.

The protein localises to the secreted. Insect toxin. This is Latartoxin-2b from Lachesana tarabaevi (Spider).